Here is a 271-residue protein sequence, read N- to C-terminus: Phosphonoacetaldehyde hydrolase (271 aa).

Aspartate 12 serves as the catalytic Nucleophile. Mg(2+) contacts are provided by aspartate 12 and alanine 14. The Schiff-base intermediate with substrate role is filled by lysine 54. A Mg(2+)-binding site is contributed by aspartate 188.

The protein belongs to the HAD-like hydrolase superfamily. PhnX family. In terms of assembly, homodimer. Requires Mg(2+) as cofactor.

It catalyses the reaction phosphonoacetaldehyde + H2O = acetaldehyde + phosphate + H(+). Its function is as follows. Involved in phosphonate degradation. This chain is Phosphonoacetaldehyde hydrolase, found in Vibrio campbellii (strain ATCC BAA-1116).